Here is a 283-residue protein sequence, read N- to C-terminus: Bifunctional protein FolD (283 aa).

NADP(+) is bound by residues 166–168 and isoleucine 232; that span reads GAS.

The protein belongs to the tetrahydrofolate dehydrogenase/cyclohydrolase family. As to quaternary structure, homodimer.

The catalysed reaction is (6R)-5,10-methylene-5,6,7,8-tetrahydrofolate + NADP(+) = (6R)-5,10-methenyltetrahydrofolate + NADPH. It carries out the reaction (6R)-5,10-methenyltetrahydrofolate + H2O = (6R)-10-formyltetrahydrofolate + H(+). Its pathway is one-carbon metabolism; tetrahydrofolate interconversion. Catalyzes the oxidation of 5,10-methylenetetrahydrofolate to 5,10-methenyltetrahydrofolate and then the hydrolysis of 5,10-methenyltetrahydrofolate to 10-formyltetrahydrofolate. This is Bifunctional protein FolD from Hamiltonella defensa subsp. Acyrthosiphon pisum (strain 5AT).